The sequence spans 511 residues: Cytochrome P450 93B2 (511 aa).

A helical transmembrane segment spans residues 4–24; the sequence is LQLIFLLFFFPTLLFLYCLPY. Cys447 is a heme binding site.

The protein belongs to the cytochrome P450 family. The cofactor is heme.

It localises to the membrane. It catalyses the reaction a flavanone + reduced [NADPH--hemoprotein reductase] + O2 = a flavone + oxidized [NADPH--hemoprotein reductase] + 2 H2O + H(+). It functions in the pathway secondary metabolite biosynthesis; flavonoid biosynthesis. In terms of biological role, functions as a flavone synthase II (FNSII) that catalyzes the direct conversion of flavanones to flavones. In vitro, can convert liquiritigenin, naringenin and eriodictyol to 7,4'-dihydroxyflavone, apigenin and luteolin, respectively. The sequence is that of Cytochrome P450 93B2 from Gerbera hybrida (Daisy).